Reading from the N-terminus, the 167-residue chain is tRNA-specific adenosine deaminase (167 aa).

Positions 6-117 (FSHEYWMRHA…DAKTGAAGSL (112 aa)) constitute a CMP/dCMP-type deaminase domain. Histidine 57 contributes to the Zn(2+) binding site. Catalysis depends on glutamate 59, which acts as the Proton donor. Zn(2+) is bound by residues cysteine 87 and cysteine 90.

This sequence belongs to the cytidine and deoxycytidylate deaminase family. As to quaternary structure, homodimer. Zn(2+) serves as cofactor.

The catalysed reaction is adenosine(34) in tRNA + H2O + H(+) = inosine(34) in tRNA + NH4(+). Functionally, catalyzes the deamination of adenosine to inosine at the wobble position 34 of tRNA(Arg2). Essential for cell viability. This is tRNA-specific adenosine deaminase from Escherichia coli (strain K12).